Consider the following 925-residue polypeptide: Serine/threonine-protein kinase PLK4 (925 aa).

The 254-residue stretch at 12–265 folds into the Protein kinase domain; the sequence is FKVGNLLGKG…LSSVLDHPFM (254 aa). ATP contacts are provided by residues 18-26 and Lys41; that span reads LGKGSFAGV. An N6-acetyllysine mark is found at Lys45 and Lys46. The active-site Proton acceptor is the Asp136. Disordered stretches follow at residues 262–283 and 328–394; these read HPFM…EDSM and KNSS…KTYS. The segment covering 330-341 has biased composition (low complexity); sequence SSDFSSGDGSNF. Residues 342–353 show a composition bias toward polar residues; it reads CTQWGNPEQEAN. Residues 359–369 show a composition bias toward basic and acidic residues; it reads RVIEDAEERPH. The span at 381–391 shows a compositional bias: polar residues; the sequence is RASPSNQSRAK. Ser400 is subject to Phosphoserine. The segment at 517 to 538 is disordered; the sequence is EVMPQEPGLHPHSEQSKNRSME. The span at 525 to 536 shows a compositional bias: basic and acidic residues; sequence LHPHSEQSKNRS. Positions 547 to 660 constitute a Cryptic POLO box 1 (CPB1) domain; that stretch reads TLRSITSPLI…SRFIQLVRSK (114 aa). Positions 661–774 constitute a Cryptic POLO box 2 (CPB2) domain; that stretch reads TPKITYFTRY…GRKPGNTSSP (114 aa). Ser778 is subject to Phosphoserine. The POLO box domain maps to 841 to 919; sequence QLLKSVFVKN…LSSILLMFSN (79 aa).

The protein belongs to the protein kinase superfamily. Ser/Thr protein kinase family. CDC5/Polo subfamily. In terms of assembly, homodimer. Interacts with CEP152 (via N-terminus). Interacts with CEP78; this interaction may be important for proper PLK4 localization to the centriole and PLK4-induced overduplication of centrioles. Interacts with CEP131. Interacts simultaneously with TENT5C and CEP192. Interacts with TENT5C; this interaction leads to the TENT5C recruitment in the centrosome. Interacts with CEP85; this interaction may be important in cell migration and centriole assembly. In terms of processing, ubiquitinated; leading to its degradation by the proteasome. Deubiquitinated by USP54; leading to PLK4 stabilization. Post-translationally, tyrosine-phosphorylated by TEC. Acetylation by KAT2A and KAT2B impairs kinase activity by shifting the kinase to an inactive conformation. In terms of tissue distribution, expressed in tissues associated with mitotic and meiotic cell division. Highly expressed in testis.

The protein localises to the cytoplasm. It is found in the cytoskeleton. Its subcellular location is the microtubule organizing center. It localises to the centrosome. The protein resides in the centriole. The protein localises to the nucleus. It is found in the nucleolus. Its subcellular location is the cleavage furrow. It carries out the reaction L-seryl-[protein] + ATP = O-phospho-L-seryl-[protein] + ADP + H(+). It catalyses the reaction L-threonyl-[protein] + ATP = O-phospho-L-threonyl-[protein] + ADP + H(+). Functionally, serine/threonine-protein kinase that plays a central role in centriole duplication. Able to trigger procentriole formation on the surface of the parental centriole cylinder, leading to the recruitment of centriole biogenesis proteins such as SASS6, CPAP, CCP110, CEP135 and gamma-tubulin. When overexpressed, it is able to induce centrosome amplification through the simultaneous generation of multiple procentrioles adjoining each parental centriole during S phase. Phosphorylates 'Ser-151' of FBXW5 during the G1/S transition, leading to inhibit FBXW5 ability to ubiquitinate SASS6. Its central role in centriole replication suggests a possible role in tumorigenesis, centrosome aberrations being frequently observed in tumors. Phosphorylates CDC25C and CHEK2. Also involved in deuterosome-mediated centriole amplification in multiciliated that can generate more than 100 centrioles. Also involved in trophoblast differentiation by phosphorylating HAND1, leading to disrupt the interaction between HAND1 and MDFIC and activate HAND1. Required for the recruitment of STIL to the centriole and for STIL-mediated centriole amplification. Phosphorylates CEP131 at 'Ser-78' and PCM1 at 'Ser-372' which is essential for proper organization and integrity of centriolar satellites. The polypeptide is Serine/threonine-protein kinase PLK4 (Mus musculus (Mouse)).